Consider the following 924-residue polypeptide: Exocyst complex component 2 (924 aa).

The 86-residue stretch at 8-93 (PLVTGISPNE…GTSTVSFKLL (86 aa)) folds into the IPT/TIG domain. Residues 240 to 260 (QKLENVLNRASNTADTLFQEV) are a coiled coil. 3 positions are modified to phosphoserine: Ser431, Ser432, and Ser435. Residue Thr440 is modified to Phosphothreonine. At Lys454 the chain carries N6-acetyllysine.

The protein belongs to the SEC5 family. The exocyst complex is composed of EXOC1, EXOC2, EXOC3, EXOC4, EXOC5, EXOC6, EXOC7 and EXOC8. Interacts with EXOC3L1. Interacts with GNEFR/DELGEF; this interaction occurs only in the presence of magnesium or manganese and is stimulated by dCTP or GTP. Interacts with RALA and RALB. Interacts with ARL13B; regulates ARL13B localization to the cilium membrane.

The protein resides in the midbody. It is found in the midbody ring. Functionally, component of the exocyst complex involved in the docking of exocytic vesicles with fusion sites on the plasma membrane. In Mus musculus (Mouse), this protein is Exocyst complex component 2 (Exoc2).